The following is a 141-amino-acid chain: NADH dehydrogenase [ubiquinone] 1 alpha subcomplex subunit 11 (141 aa).

The next 2 membrane-spanning stretches (helical) occupy residues 21–43 (KTYI…RVSL) and 58–80 (RYTF…SAQV).

Belongs to the complex I NDUFA11 subunit family. As to quaternary structure, complex I is composed of 45 different subunits.

It localises to the mitochondrion inner membrane. Its function is as follows. Accessory subunit of the mitochondrial membrane respiratory chain NADH dehydrogenase (Complex I), that is believed not to be involved in catalysis. Complex I functions in the transfer of electrons from NADH to the respiratory chain. The immediate electron acceptor for the enzyme is believed to be ubiquinone. In Mus musculus (Mouse), this protein is NADH dehydrogenase [ubiquinone] 1 alpha subcomplex subunit 11 (Ndufa11).